The primary structure comprises 265 residues: tRNA pseudouridine synthase A (265 aa).

The Nucleophile role is filled by D53. Residue Y111 participates in substrate binding.

This sequence belongs to the tRNA pseudouridine synthase TruA family. Homodimer.

It catalyses the reaction uridine(38/39/40) in tRNA = pseudouridine(38/39/40) in tRNA. In terms of biological role, formation of pseudouridine at positions 38, 39 and 40 in the anticodon stem and loop of transfer RNAs. The protein is tRNA pseudouridine synthase A of Acinetobacter baumannii (strain ACICU).